Here is a 236-residue protein sequence, read N- to C-terminus: Uridylate kinase (236 aa).

9 to 12 is an ATP binding site; sequence KFSG. The involved in allosteric activation by GTP stretch occupies residues 17-22; sequence GNSGFG. UMP is bound at residue Gly51. ATP-binding residues include Gly52 and Arg56. Residues Asp72 and 133–140 contribute to the UMP site; that span reads TGNPFFTT. Residues Thr160, Tyr166, and Asp169 each coordinate ATP.

It belongs to the UMP kinase family. In terms of assembly, homohexamer.

It localises to the cytoplasm. The catalysed reaction is UMP + ATP = UDP + ADP. It functions in the pathway pyrimidine metabolism; CTP biosynthesis via de novo pathway; UDP from UMP (UMPK route): step 1/1. With respect to regulation, allosterically activated by GTP. Inhibited by UTP. Its function is as follows. Catalyzes the reversible phosphorylation of UMP to UDP. This Helicobacter hepaticus (strain ATCC 51449 / 3B1) protein is Uridylate kinase.